The following is a 612-amino-acid chain: Dihydroxy-acid dehydratase (612 aa).

Aspartate 81 contributes to the Mg(2+) binding site. Cysteine 122 provides a ligand contact to [2Fe-2S] cluster. Residues aspartate 123 and lysine 124 each coordinate Mg(2+). Lysine 124 bears the N6-carboxylysine mark. Cysteine 193 serves as a coordination point for [2Fe-2S] cluster. Glutamate 489 serves as a coordination point for Mg(2+). Catalysis depends on serine 515, which acts as the Proton acceptor.

It belongs to the IlvD/Edd family. In terms of assembly, homodimer. [2Fe-2S] cluster serves as cofactor. Mg(2+) is required as a cofactor.

It catalyses the reaction (2R)-2,3-dihydroxy-3-methylbutanoate = 3-methyl-2-oxobutanoate + H2O. The enzyme catalyses (2R,3R)-2,3-dihydroxy-3-methylpentanoate = (S)-3-methyl-2-oxopentanoate + H2O. Its pathway is amino-acid biosynthesis; L-isoleucine biosynthesis; L-isoleucine from 2-oxobutanoate: step 3/4. It participates in amino-acid biosynthesis; L-valine biosynthesis; L-valine from pyruvate: step 3/4. Functionally, functions in the biosynthesis of branched-chain amino acids. Catalyzes the dehydration of (2R,3R)-2,3-dihydroxy-3-methylpentanoate (2,3-dihydroxy-3-methylvalerate) into 2-oxo-3-methylpentanoate (2-oxo-3-methylvalerate) and of (2R)-2,3-dihydroxy-3-methylbutanoate (2,3-dihydroxyisovalerate) into 2-oxo-3-methylbutanoate (2-oxoisovalerate), the penultimate precursor to L-isoleucine and L-valine, respectively. This is Dihydroxy-acid dehydratase from Pseudomonas aeruginosa (strain LESB58).